The primary structure comprises 364 residues: Very-long-chain (3R)-3-hydroxyacyl-CoA dehydratase 3 (364 aa).

Topologically, residues 1 to 151 (MAMENQVLTP…ETLTNLRKGY (151 aa)) are cytoplasmic. The region spanning 7–96 (VLTPHVYWAQ…KVSQWWERLT (90 aa)) is the CS domain. T9 bears the Phosphothreonine mark. Residues 113–138 (LDESDAEMELRAKEEERLNKLRLESE) adopt a coiled-coil conformation. S116 and S137 each carry phosphoserine. A helical membrane pass occupies residues 152 to 172 (LFMYNLVQFLGFSWIFVNLTV). Over 173–191 (RFCILGKESFYDTFHTVAD) the chain is Lumenal. Residues 192-212 (MMYFCQMLAVVETINAAIGVT) traverse the membrane as a helical segment. At 213 to 214 (TS) the chain is on the cytoplasmic side. A helical membrane pass occupies residues 215 to 235 (PVLPSLIQLLGRNFILFIIFG). Residues 236-244 (TMEEMQNKA) are Lumenal-facing. Residues 245–265 (VVFFVFYLWSAIEIFRYSFYM) form a helical membrane-spanning segment. Topologically, residues 266–282 (LTCIDMDWEVLTWLRYT) are cytoplasmic. A helical transmembrane segment spans residues 283 to 303 (LWIPLYPLGCLAEAVSVVQSI). Residues Y288 and E295 contribute to the active site. At 304–324 (PIFNETGRFSFTLPYPVKIKV) the chain is on the lumenal side. Residues 325 to 345 (RFSFFLQIYLIMIFLGLYINF) traverse the membrane as a helical segment. Over 346–364 (RHLYKQRRRRYGQKKKKIH) the chain is Cytoplasmic.

It belongs to the very long-chain fatty acids dehydratase HACD family. May interact with enzymes of the ELO family (including ELOVL1); with those enzymes that mediate condensation, the first of the four steps of the reaction cycle responsible for fatty acids elongation, may be part of a larger fatty acids elongase complex. Interacts with RAC1.

The protein resides in the endoplasmic reticulum membrane. It catalyses the reaction a very-long-chain (3R)-3-hydroxyacyl-CoA = a very-long-chain (2E)-enoyl-CoA + H2O. It carries out the reaction (3R)-hydroxyhexadecanoyl-CoA = (2E)-hexadecenoyl-CoA + H2O. The protein operates within lipid metabolism; fatty acid biosynthesis. In terms of biological role, catalyzes the third of the four reactions of the long-chain fatty acids elongation cycle. This endoplasmic reticulum-bound enzymatic process, allows the addition of two carbons to the chain of long- and very long-chain fatty acids/VLCFAs per cycle. This enzyme catalyzes the dehydration of the 3-hydroxyacyl-CoA intermediate into trans-2,3-enoyl-CoA, within each cycle of fatty acid elongation. Thereby, it participates in the production of VLCFAs of different chain lengths that are involved in multiple biological processes as precursors of membrane lipids and lipid mediators. Involved in Rac1-signaling pathways leading to the modulation of gene expression. The protein is Very-long-chain (3R)-3-hydroxyacyl-CoA dehydratase 3 of Pongo abelii (Sumatran orangutan).